Here is a 156-residue protein sequence, read N- to C-terminus: Small ribosomal subunit protein uS7 (156 aa).

The protein belongs to the universal ribosomal protein uS7 family. In terms of assembly, part of the 30S ribosomal subunit. Contacts proteins S9 and S11.

Functionally, one of the primary rRNA binding proteins, it binds directly to 16S rRNA where it nucleates assembly of the head domain of the 30S subunit. Is located at the subunit interface close to the decoding center, probably blocks exit of the E-site tRNA. This is Small ribosomal subunit protein uS7 from Haemophilus influenzae (strain 86-028NP).